The following is a 61-amino-acid chain: Short neurotoxin 1 (61 aa).

4 disulfide bridges follow: cysteine 3/cysteine 23, cysteine 17/cysteine 40, cysteine 42/cysteine 53, and cysteine 54/cysteine 59.

This sequence belongs to the three-finger toxin family. Short-chain subfamily. Type I alpha-neurotoxin sub-subfamily. In terms of tissue distribution, expressed by the venom gland.

The protein resides in the secreted. Binds to muscle nicotinic acetylcholine receptor (nAChR) and inhibit acetylcholine from binding to the receptor, thereby impairing neuromuscular transmission. The sequence is that of Short neurotoxin 1 from Naja samarensis (Peters' cobra).